The chain runs to 450 residues: UDP-N-acetylmuramoylalanine--D-glutamate ligase (450 aa).

119-125 is a binding site for ATP; the sequence is GSNGKTT.

Belongs to the MurCDEF family.

Its subcellular location is the cytoplasm. It carries out the reaction UDP-N-acetyl-alpha-D-muramoyl-L-alanine + D-glutamate + ATP = UDP-N-acetyl-alpha-D-muramoyl-L-alanyl-D-glutamate + ADP + phosphate + H(+). Its pathway is cell wall biogenesis; peptidoglycan biosynthesis. In terms of biological role, cell wall formation. Catalyzes the addition of glutamate to the nucleotide precursor UDP-N-acetylmuramoyl-L-alanine (UMA). The chain is UDP-N-acetylmuramoylalanine--D-glutamate ligase from Bacillus cereus (strain AH187).